Reading from the N-terminus, the 117-residue chain is Large ribosomal subunit protein uL22 (117 aa).

Belongs to the universal ribosomal protein uL22 family. As to quaternary structure, part of the 50S ribosomal subunit.

In terms of biological role, this protein binds specifically to 23S rRNA; its binding is stimulated by other ribosomal proteins, e.g. L4, L17, and L20. It is important during the early stages of 50S assembly. It makes multiple contacts with different domains of the 23S rRNA in the assembled 50S subunit and ribosome. Functionally, the globular domain of the protein is located near the polypeptide exit tunnel on the outside of the subunit, while an extended beta-hairpin is found that lines the wall of the exit tunnel in the center of the 70S ribosome. This Lacticaseibacillus casei (strain BL23) (Lactobacillus casei) protein is Large ribosomal subunit protein uL22.